Here is a 316-residue protein sequence, read N- to C-terminus: MANLKEIRDRIVSVKNTRKITEAMRLVAAAKVRRAQDQVLKSRPFADKLARVLENIQSRVQFEAVDSPLLSKRNVKKISLVCITADRGLCGGYNTNIIKKVEIRYAELIKQGYEPNLILVGKKAIGYFQNRKDRYVIKSTFKELEQVPTAIDSEGITNDVLAEFLSENSDRVEIIYTKFITLVSCAPVVQTLLPLDPQGIAEDNDEIFRLTTKNSKLLVEKSNIEKNDSDKLPSDIVFEQSPDQLLDSLLPLYLQNQILRALQESAASELACRMTAMNNASDNAKELASTLNLTYNKARQAAITQEILEVVGGSAV.

It belongs to the ATPase gamma chain family. As to quaternary structure, F-type ATPases have 2 components, CF(1) - the catalytic core - and CF(0) - the membrane proton channel. CF(1) has five subunits: alpha(3), beta(3), gamma(1), delta(1), epsilon(1). CF(0) has three main subunits: a, b and c.

It localises to the cellular thylakoid membrane. Produces ATP from ADP in the presence of a proton gradient across the membrane. The gamma chain is believed to be important in regulating ATPase activity and the flow of protons through the CF(0) complex. The protein is ATP synthase gamma chain of Prochlorococcus marinus subsp. pastoris (strain CCMP1986 / NIES-2087 / MED4).